We begin with the raw amino-acid sequence, 794 residues long: Phosphoribosylformylglycinamidine synthase subunit PurL (794 aa).

Histidine 47 is a catalytic residue. Residues tyrosine 50 and lysine 89 each contribute to the ATP site. Residue glutamate 91 coordinates Mg(2+). Substrate-binding positions include 92 to 95 (SHNH) and arginine 114. Residue histidine 93 is the Proton acceptor of the active site. Aspartate 115 is a Mg(2+) binding site. Glutamine 238 serves as a coordination point for substrate. A Mg(2+)-binding site is contributed by aspartate 266. 310–312 (ESQ) contributes to the substrate binding site. 2 residues coordinate ATP: aspartate 522 and glycine 559. Asparagine 560 is a binding site for Mg(2+). Serine 562 serves as a coordination point for substrate.

The protein belongs to the FGAMS family. Monomer. Part of the FGAM synthase complex composed of 1 PurL, 1 PurQ and 2 PurS subunits.

It is found in the cytoplasm. The catalysed reaction is N(2)-formyl-N(1)-(5-phospho-beta-D-ribosyl)glycinamide + L-glutamine + ATP + H2O = 2-formamido-N(1)-(5-O-phospho-beta-D-ribosyl)acetamidine + L-glutamate + ADP + phosphate + H(+). It participates in purine metabolism; IMP biosynthesis via de novo pathway; 5-amino-1-(5-phospho-D-ribosyl)imidazole from N(2)-formyl-N(1)-(5-phospho-D-ribosyl)glycinamide: step 1/2. Functionally, part of the phosphoribosylformylglycinamidine synthase complex involved in the purines biosynthetic pathway. Catalyzes the ATP-dependent conversion of formylglycinamide ribonucleotide (FGAR) and glutamine to yield formylglycinamidine ribonucleotide (FGAM) and glutamate. The FGAM synthase complex is composed of three subunits. PurQ produces an ammonia molecule by converting glutamine to glutamate. PurL transfers the ammonia molecule to FGAR to form FGAM in an ATP-dependent manner. PurS interacts with PurQ and PurL and is thought to assist in the transfer of the ammonia molecule from PurQ to PurL. The chain is Phosphoribosylformylglycinamidine synthase subunit PurL from Prochlorococcus marinus (strain MIT 9313).